Consider the following 400-residue polypeptide: Acetate kinase (400 aa).

Position 7 (Asn7) interacts with Mg(2+). Position 14 (Lys14) interacts with ATP. Residue Arg90 coordinates substrate. Residue Asp147 is the Proton donor/acceptor of the active site. Residues 207 to 211 (HLGNG), 282 to 284 (DFR), and 331 to 335 (GIGEN) each bind ATP. Residue Glu384 participates in Mg(2+) binding.

The protein belongs to the acetokinase family. In terms of assembly, homodimer. Requires Mg(2+) as cofactor. It depends on Mn(2+) as a cofactor.

It localises to the cytoplasm. The catalysed reaction is acetate + ATP = acetyl phosphate + ADP. It participates in metabolic intermediate biosynthesis; acetyl-CoA biosynthesis; acetyl-CoA from acetate: step 1/2. Its function is as follows. Catalyzes the formation of acetyl phosphate from acetate and ATP. Can also catalyze the reverse reaction. The sequence is that of Acetate kinase from Thermoanaerobacterium thermosaccharolyticum (strain ATCC 7956 / DSM 571 / NCIMB 9385 / NCA 3814 / NCTC 13789 / WDCM 00135 / 2032) (Clostridium thermosaccharolyticum).